We begin with the raw amino-acid sequence, 276 residues long: Reaction center protein L chain (276 aa).

3 consecutive transmembrane segments (helical) span residues 33–56, 85–113, and 116–141; these read GFFGVTTLLFTVLGTALIVWGAAL, GLWQIITFSAIGAFVSWALREVEICRKLG, and YHIPFAFGFAILAYVSLVVIRPVMMG. 2 residues coordinate (7R,8Z)-bacteriochlorophyll b: His154 and His174. The chain crosses the membrane as a helical span at residues 171–200; it reads NPAHMLGITLFFTTCLALALHGSLILSAAN. Residue His191 coordinates Fe cation. An a ubiquinone-binding site is contributed by Phe217. The helical transmembrane segment at 226-252 threads the bilayer; sequence GTLGIHRVGLILALSAVVWSIICMILS. His231 is a binding site for Fe cation.

The protein belongs to the reaction center PufL/M/PsbA/D family. As to quaternary structure, reaction center is composed of four bacteriochlorophylls, two bacteriopheophytins, two ubiquinones, one iron, and three highly hydrophobic polypeptide chains (designated L, M, and H).

The protein localises to the cellular chromatophore membrane. Functionally, the reaction center is a membrane-bound complex that mediates the initial photochemical event in the electron transfer process of photosynthesis. This Rhodospirillum rubrum protein is Reaction center protein L chain (pufL).